The sequence spans 193 residues: Ion-translocating oxidoreductase complex subunit A (193 aa).

The next 6 helical transmembrane spans lie at 5 to 25, 47 to 67, 72 to 92, 102 to 122, 134 to 154, and 171 to 191; these read LLLF…FLGL, FVMT…LIPL, LRTL…EMVV, LLGI…VALL, ALYG…FAAI, and AIAL…SGLV.

Belongs to the NqrDE/RnfAE family. In terms of assembly, the complex is composed of six subunits: RsxA, RsxB, RsxC, RsxD, RsxE and RsxG.

Its subcellular location is the cell inner membrane. In terms of biological role, part of a membrane-bound complex that couples electron transfer with translocation of ions across the membrane. Required to maintain the reduced state of SoxR. This Salmonella agona (strain SL483) protein is Ion-translocating oxidoreductase complex subunit A.